A 788-amino-acid chain; its full sequence is Protein translocase subunit SecA (788 aa).

ATP is bound by residues Gln85, 103–107 (GEGKT), and Asp494.

It belongs to the SecA family. Monomer and homodimer. Part of the essential Sec protein translocation apparatus which comprises SecA, SecYEG and auxiliary proteins SecDF. Other proteins may also be involved.

The protein resides in the cell membrane. The protein localises to the cytoplasm. It catalyses the reaction ATP + H2O + cellular proteinSide 1 = ADP + phosphate + cellular proteinSide 2.. Functionally, part of the Sec protein translocase complex. Interacts with the SecYEG preprotein conducting channel. Has a central role in coupling the hydrolysis of ATP to the transfer of proteins into and across the cell membrane, serving as an ATP-driven molecular motor driving the stepwise translocation of polypeptide chains across the membrane. The protein is Protein translocase subunit SecA of Oenococcus oeni (strain ATCC BAA-331 / PSU-1).